Here is a 99-residue protein sequence, read N- to C-terminus: Protein translation factor SUI1 homolog (99 aa).

The protein belongs to the SUI1 family.

In Pyrococcus horikoshii (strain ATCC 700860 / DSM 12428 / JCM 9974 / NBRC 100139 / OT-3), this protein is Protein translation factor SUI1 homolog.